Consider the following 735-residue polypeptide: Photosystem I P700 chlorophyll a apoprotein A2 (735 aa).

Helical transmembrane passes span 47-70 (IFASHFGQLAIIFLWTSGNLFHVA), 136-159 (LFTGSVFLALVSAVFLFAGWLHLQ), 176-200 (LNHHLSGLFGVSSLAWTGHLVHVAI), 274-292 (MAHHHLAIAVIFIVAGHMY), 331-354 (LHFQLGLALASVGTITSMIAQHIY), 370-396 (AALYTHHQYIAGFIMCGAFAHGAIFFI), 418-440 (AIISHLSWVTLFLGFHTLGLYVH), and 518-536 (FLVHHAIALGLHTTTLILV). C560 and C569 together coordinate [4Fe-4S] cluster. 2 helical membrane passes run 576-597 (AFYLAVFWMLNTIGWVTFYFHW) and 644-666 (LSVWAFCFLFGHLIYATGFMFLI). Residues H655, M663, and Y671 each contribute to the chlorophyll a site. Phylloquinone is bound at residue W672. The helical transmembrane segment at 708-728 (LVGLVHFSVGYIFTYAAFLIA) threads the bilayer.

It belongs to the PsaA/PsaB family. The PsaA/B heterodimer binds the P700 chlorophyll special pair and subsequent electron acceptors. PSI consists of a core antenna complex that captures photons, and an electron transfer chain that converts photonic excitation into a charge separation. The eukaryotic PSI reaction center is composed of at least 11 subunits. P700 is a chlorophyll a/chlorophyll a' dimer, A0 is one or more chlorophyll a, A1 is one or both phylloquinones and FX is a shared 4Fe-4S iron-sulfur center. serves as cofactor.

It localises to the plastid. The protein resides in the chloroplast thylakoid membrane. It catalyses the reaction reduced [plastocyanin] + hnu + oxidized [2Fe-2S]-[ferredoxin] = oxidized [plastocyanin] + reduced [2Fe-2S]-[ferredoxin]. Its function is as follows. PsaA and PsaB bind P700, the primary electron donor of photosystem I (PSI), as well as the electron acceptors A0, A1 and FX. PSI is a plastocyanin/cytochrome c6-ferredoxin oxidoreductase, converting photonic excitation into a charge separation, which transfers an electron from the donor P700 chlorophyll pair to the spectroscopically characterized acceptors A0, A1, FX, FA and FB in turn. Oxidized P700 is reduced on the lumenal side of the thylakoid membrane by plastocyanin or cytochrome c6. The protein is Photosystem I P700 chlorophyll a apoprotein A2 of Chlamydomonas moewusii (Chlamydomonas eugametos).